Reading from the N-terminus, the 261-residue chain is Synaptophysin-like protein 1 (261 aa).

The Cytoplasmic segment spans residues 1–33 (MASKANMVRQRFSRLSQRMSAFQINLNPLKEPL). The region spanning 28–239 (PLKEPLGFIK…NAWFVYKETS (212 aa)) is the MARVEL domain. Residues 34-54 (GFIKILEWFASIFAFATCGGF) traverse the membrane as a helical segment. Residues 55 to 117 (KGKTEIQVNC…LIGDYSSSAQ (63 aa)) are Vesicular-facing. Asn72 and Asn95 each carry an N-linked (GlcNAc...) asparagine glycan. The helical transmembrane segment at 118 to 138 (FYVTFAVFVFLYCIAALLLYV) threads the bilayer. The Cytoplasmic segment spans residues 139-151 (GYTNLYRDSRKLP). A helical transmembrane segment spans residues 152–172 (MIDFIVTLVATFLWLVSSSAW). The Vesicular portion of the chain corresponds to 173-214 (AKALTDIKVATGHRIVEELEICNPESGVSCYFVSVTSMGSLN). An N-linked (GlcNAc...) asparagine glycan is attached at Asn214. A helical membrane pass occupies residues 215–235 (VSVIFGFLNMILWGGNAWFVY). Topologically, residues 236–261 (KETSLHSPSNTSASHSQGGGPPTSGM) are cytoplasmic. Residues 241 to 251 (HSPSNTSASHS) show a composition bias toward polar residues. Residues 241-261 (HSPSNTSASHSQGGGPPTSGM) form a disordered region. A compositionally biased stretch (gly residues) spans 252–261 (QGGGPPTSGM).

Belongs to the synaptophysin/synaptobrevin family. As to expression, ubiquitously expressed.

It is found in the cytoplasmic vesicle membrane. Its subcellular location is the melanosome. This chain is Synaptophysin-like protein 1 (Sypl1), found in Mus musculus (Mouse).